We begin with the raw amino-acid sequence, 274 residues long: 3-methyl-2-oxobutanoate hydroxymethyltransferase (274 aa).

2 residues coordinate Mg(2+): aspartate 49 and aspartate 88. Residues 49–50, aspartate 88, and lysine 118 each bind 3-methyl-2-oxobutanoate; that span reads DS. Glutamate 120 provides a ligand contact to Mg(2+). The active-site Proton acceptor is glutamate 187.

It belongs to the PanB family. Homodecamer; pentamer of dimers. Mg(2+) is required as a cofactor.

The protein localises to the cytoplasm. It catalyses the reaction 3-methyl-2-oxobutanoate + (6R)-5,10-methylene-5,6,7,8-tetrahydrofolate + H2O = 2-dehydropantoate + (6S)-5,6,7,8-tetrahydrofolate. It functions in the pathway cofactor biosynthesis; (R)-pantothenate biosynthesis; (R)-pantoate from 3-methyl-2-oxobutanoate: step 1/2. In terms of biological role, catalyzes the reversible reaction in which hydroxymethyl group from 5,10-methylenetetrahydrofolate is transferred onto alpha-ketoisovalerate to form ketopantoate. The chain is 3-methyl-2-oxobutanoate hydroxymethyltransferase from Nitrobacter winogradskyi (strain ATCC 25391 / DSM 10237 / CIP 104748 / NCIMB 11846 / Nb-255).